The following is a 31-amino-acid chain: Conotoxin Cltx-2 (31 aa).

4-hydroxyproline is present on residues P6 and P31.

Post-translationally, contains 4 disulfide bonds. As to expression, expressed by the venom duct.

It is found in the secreted. The protein is Conotoxin Cltx-2 of Californiconus californicus (California cone).